The following is a 233-amino-acid chain: Large ribosomal subunit protein uL1 (233 aa).

It belongs to the universal ribosomal protein uL1 family. In terms of assembly, part of the 50S ribosomal subunit.

Functionally, binds directly to 23S rRNA. The L1 stalk is quite mobile in the ribosome, and is involved in E site tRNA release. In terms of biological role, protein L1 is also a translational repressor protein, it controls the translation of the L11 operon by binding to its mRNA. In Geobacillus sp. (strain WCH70), this protein is Large ribosomal subunit protein uL1.